A 96-amino-acid polypeptide reads, in one-letter code: Conantokin-E (96 aa).

A signal peptide spans 1–24; the sequence is LLVPLVTFHLILGMGTLDHGGALT. Positions 25–72 are excised as a propeptide; that stretch reads ERRSADATALKPEPVLLQKSDARSTDDNDKDRLTQMKRILKKRGNKAR. Residues 28–57 form a disordered region; sequence SADATALKPEPVLLQKSDARSTDDNDKDRL. Over residues 44–57 the composition is skewed to basic and acidic residues; it reads SDARSTDDNDKDRL. 4-carboxyglutamate occurs at positions 75, 76, 82, 86, and 95. 2 residues coordinate a divalent metal cation: Glu82 and Glu86. Cys83 and Cys96 form a disulfide bridge.

Belongs to the conotoxin B superfamily. Expressed by the venom duct.

It is found in the secreted. Conantokins inhibit N-methyl-D-aspartate (NMDA) receptors. This toxin has the highest potency for the NR2B/GRIN2B subunit, followed by NR2A/GRIN2A, NR2C/GRIN2C, and NR2D/GRIN2D subunits. The chain is Conantokin-E from Conus ermineus (Agate cone).